A 252-amino-acid chain; its full sequence is Phosphate import ATP-binding protein PstB (252 aa).

Residues Met5–Ile247 enclose the ABC transporter domain. Gly37–Ser44 serves as a coordination point for ATP.

The protein belongs to the ABC transporter superfamily. Phosphate importer (TC 3.A.1.7) family. As to quaternary structure, the complex is composed of two ATP-binding proteins (PstB), two transmembrane proteins (PstC and PstA) and a solute-binding protein (PstS).

Its subcellular location is the cell inner membrane. The catalysed reaction is phosphate(out) + ATP + H2O = ADP + 2 phosphate(in) + H(+). Part of the ABC transporter complex PstSACB involved in phosphate import. Responsible for energy coupling to the transport system. The sequence is that of Phosphate import ATP-binding protein PstB from Bartonella henselae (strain ATCC 49882 / DSM 28221 / CCUG 30454 / Houston 1) (Rochalimaea henselae).